The primary structure comprises 262 residues: Nitrate transport protein NasD (262 aa).

Residues I5–D239 form the ABC transporter domain. Residue G41 to S48 participates in ATP binding.

This sequence belongs to the ABC transporter superfamily.

Its subcellular location is the cell membrane. Functionally, probably part of a high-affinity binding-protein-dependent transport system for nitrate. Probably responsible for energy coupling to the transport system. The polypeptide is Nitrate transport protein NasD (nasD) (Klebsiella oxytoca).